Consider the following 283-residue polypeptide: 4-diphosphocytidyl-2-C-methyl-D-erythritol kinase (283 aa).

The active site involves Lys10. 94–104 contributes to the ATP binding site; the sequence is PVAAGLAGGSS. Asp136 is an active-site residue.

Belongs to the GHMP kinase family. IspE subfamily.

It catalyses the reaction 4-CDP-2-C-methyl-D-erythritol + ATP = 4-CDP-2-C-methyl-D-erythritol 2-phosphate + ADP + H(+). It functions in the pathway isoprenoid biosynthesis; isopentenyl diphosphate biosynthesis via DXP pathway; isopentenyl diphosphate from 1-deoxy-D-xylulose 5-phosphate: step 3/6. Catalyzes the phosphorylation of the position 2 hydroxy group of 4-diphosphocytidyl-2C-methyl-D-erythritol. This is 4-diphosphocytidyl-2-C-methyl-D-erythritol kinase from Enterococcus faecalis (strain ATCC 700802 / V583).